Consider the following 150-residue polypeptide: Arginine repressor (150 aa).

Belongs to the ArgR family.

The protein localises to the cytoplasm. It functions in the pathway amino-acid biosynthesis; L-arginine biosynthesis [regulation]. Regulates arginine biosynthesis genes. In Staphylococcus aureus (strain Mu3 / ATCC 700698), this protein is Arginine repressor.